A 447-amino-acid polypeptide reads, in one-letter code: MPGSLIDTRQQPLSVGIVGGGIIGVILAAGLVRRGIDVKVFEQARGFREIGAGMAFTANAVRCMEMLDPAIVWALRSSGAVPISIGDHQAEARDYLRWVDGYHESSKRLYQLDAGIRGFEACRRDQFLEALVKVLPEGIVECQKRLQKIHEKNETEKVTLEFADGTFAHVDCVIGADGIRSRVRQHLFGEDSPYSHPHYSHKFAFRGLITMENAISALGEDKARTLNMHVGPNAHLIHYPVANETMVNIAAFVSDPEEWPDKLSLVGPATREEAMGYFANWNPGLRAVLGFMPENIDRWAMFDTYDYPAPFFSRGKICLVGDAAHAAVPHHGAGACIGIEDALCATVLLAEVFVSTRGKSSIVRNRAIAAAFGSFNAVRRVRAQWFVDSSRRVCDLYQQPEWADPQKRIKAENCFEEIKDRSHKIWHFDYNSMLQEAIEKYRHNMGS.

Residues proline 12–valine 32 form a helical membrane-spanning segment. FAD is bound by residues glutamate 42, alanine 55, and arginine 124. A glycan (N-linked (GlcNAc...) asparagine) is linked at asparagine 153. Residues arginine 206 and tyrosine 239 contribute to the active site. Residue asparagine 243 is glycosylated (N-linked (GlcNAc...) asparagine). FAD-binding residues include aspartate 322 and alanine 335.

This sequence belongs to the paxM FAD-dependent monooxygenase family. The cofactor is FAD.

The protein localises to the membrane. The protein operates within secondary metabolite biosynthesis. FAD-dependent monooxygenase; part of the gene cluster that mediates the biosynthesis of the tropolone class of fungal maleic anhydrides. Within the pathway, tropB catalyzes a synthetically challenging asymmetric oxidative dearomatization reaction to convert 3-methylorcinaldehyde into a hydroxycyclohexadione. The pathway begins with the synthesis of 3-methylorcinaldehyde by the non-reducing polyketide synthase (PKS) tropA. 3-methylorcinaldehyde is the substrate for the FAD-dependent monooxygenase tropB to yield a dearomatized hydroxycyclohexadione. The 2-oxoglutarate-dependent dioxygenase tropC then performs the oxidative ring expansion to provide the first tropolone metabolite stipitaldehyde. Trop D converts stipitaldehyde into stipitacetal which is in turn converted to stipitalide by the short-chain dehydrogenase/reductase tropE. The next steps involve tropF, tropG, tropH, tropI and tropJ to form successive tropolone maleic anhydrides including stipitaldehydic, stipitatonic and stipitatic acids. This Talaromyces stipitatus (strain ATCC 10500 / CBS 375.48 / QM 6759 / NRRL 1006) (Penicillium stipitatum) protein is FAD-dependent monooxygenase tropB.